Reading from the N-terminus, the 409-residue chain is Argininosuccinate synthase (409 aa).

ATP-binding positions include 15–23 and alanine 42; that span reads AYSGGLDTS. L-citrulline contacts are provided by tyrosine 93 and serine 98. An ATP-binding site is contributed by glycine 123. Threonine 125, asparagine 129, and aspartate 130 together coordinate L-aspartate. Residue asparagine 129 participates in L-citrulline binding. L-citrulline-binding residues include arginine 133, serine 182, serine 191, glutamate 267, and tyrosine 279.

The protein belongs to the argininosuccinate synthase family. Type 1 subfamily. In terms of assembly, homotetramer.

Its subcellular location is the cytoplasm. The enzyme catalyses L-citrulline + L-aspartate + ATP = 2-(N(omega)-L-arginino)succinate + AMP + diphosphate + H(+). It participates in amino-acid biosynthesis; L-arginine biosynthesis; L-arginine from L-ornithine and carbamoyl phosphate: step 2/3. This is Argininosuccinate synthase from Desulfitobacterium hafniense (strain Y51).